Reading from the N-terminus, the 93-residue chain is Large ribosomal subunit protein bL31 (93 aa).

Residues 68–93 (GSADAAADEKKPDAKNNNKDNTSKED) form a disordered region. Basic and acidic residues predominate over residues 74 to 93 (ADEKKPDAKNNNKDNTSKED).

It belongs to the bacterial ribosomal protein bL31 family. Type A subfamily. As to quaternary structure, part of the 50S ribosomal subunit.

Its function is as follows. Binds the 23S rRNA. The protein is Large ribosomal subunit protein bL31 of Prochlorococcus marinus (strain MIT 9313).